A 325-amino-acid chain; its full sequence is uncharacterized protein (325 aa).

The segment at 108–141 (PHRTQGISSTSSKSSKGGKKTPVRSTPKEIKKAT) is disordered.

This is an uncharacterized protein from Homo sapiens (Human).